The chain runs to 524 residues: Inosine-5'-monophosphate dehydrogenase 4 (524 aa).

CBS domains lie at 122–183 (FINS…VVSE) and 185–241 (MTKN…PLAS). Phosphoserine is present on Ser125. NAD(+) is bound by residues 279 to 281 (DSS) and 329 to 331 (GMG). Gly331 and Gly333 together coordinate K(+). Ser334 is a binding site for IMP. Residue Cys336 coordinates K(+). The active-site Thioimidate intermediate is the Cys336. IMP-binding positions include 369 to 371 (DGG), 392 to 393 (GG), and 416 to 420 (YRGMG). Arg438 acts as the Proton acceptor in catalysis. An IMP-binding site is contributed by Gln450. K(+)-binding residues include Glu509, Gly510, and Gly511.

This sequence belongs to the IMPDH/GMPR family. Homotetramer. Seems to be able to form heterotetramers composed from more than 1 of the 3 IMPDH gene products (IMD2-4). Requires K(+) as cofactor.

The protein localises to the cytoplasm. The enzyme catalyses IMP + NAD(+) + H2O = XMP + NADH + H(+). It functions in the pathway purine metabolism; XMP biosynthesis via de novo pathway; XMP from IMP: step 1/1. With respect to regulation, mycophenolic acid (MPA) is a non-competitive inhibitor that prevents formation of the closed enzyme conformation by binding to the same site as the amobile flap. In contrast, mizoribine monophosphate (MZP) is a competitive inhibitor that induces the closed conformation. MPA is a potent inhibitor of mammalian IMPDHs but a poor inhibitor of the bacterial enzymes. MZP is a more potent inhibitor of bacterial IMPDH. Catalyzes the conversion of inosine 5'-phosphate (IMP) to xanthosine 5'-phosphate (XMP), the first committed and rate-limiting step in the de novo synthesis of guanine nucleotides, and therefore plays an important role in the regulation of cell growth. This Saccharomyces cerevisiae (strain ATCC 204508 / S288c) (Baker's yeast) protein is Inosine-5'-monophosphate dehydrogenase 4.